A 159-amino-acid chain; its full sequence is U-actitoxin-Avd13b (159 aa).

Residues 1 to 18 (MKSIFLVFFAVCLVKAEA) form the signal peptide. A propeptide spanning residues 19–26 (GKGRKREP) is cleaved from the precursor. 2 disulfides stabilise this stretch: cysteine 33-cysteine 45 and cysteine 36-cysteine 52. Residues 59 to 60 (EP) constitute a propeptide that is removed on maturation. 2 disulfides stabilise this stretch: cysteine 67–cysteine 79 and cysteine 70–cysteine 86. A propeptide spanning residues 93–94 (EP) is cleaved from the precursor. 2 cysteine pairs are disulfide-bonded: cysteine 101–cysteine 113 and cysteine 104–cysteine 120. Residues 127-128 (EP) constitute a propeptide that is removed on maturation. 2 disulfides stabilise this stretch: cysteine 135-cysteine 147 and cysteine 138-cysteine 154.

Belongs to the sea anemone BBH family.

It is found in the secreted. The protein resides in the nematocyst. Inhibits ion channels. The sequence is that of U-actitoxin-Avd13b from Anemonia viridis (Snakelocks anemone).